We begin with the raw amino-acid sequence, 267 residues long: Glutamate 5-kinase (267 aa).

Lysine 17 is an ATP binding site. Residues serine 57, aspartate 144, and asparagine 156 each contribute to the substrate site. Residues 176-177 (SD) and 218-224 (TGGMATK) each bind ATP.

This sequence belongs to the glutamate 5-kinase family.

The protein resides in the cytoplasm. It carries out the reaction L-glutamate + ATP = L-glutamyl 5-phosphate + ADP. It participates in amino-acid biosynthesis; L-proline biosynthesis; L-glutamate 5-semialdehyde from L-glutamate: step 1/2. Its function is as follows. Catalyzes the transfer of a phosphate group to glutamate to form L-glutamate 5-phosphate. The chain is Glutamate 5-kinase from Clostridium acetobutylicum (strain ATCC 824 / DSM 792 / JCM 1419 / IAM 19013 / LMG 5710 / NBRC 13948 / NRRL B-527 / VKM B-1787 / 2291 / W).